We begin with the raw amino-acid sequence, 146 residues long: Hemoglobin subunit beta (146 aa).

The 145-residue stretch at 2-146 (QWTAEEKQLI…VAHALARKYH (145 aa)) folds into the Globin domain. Heme b is bound by residues His63 and His92.

The protein belongs to the globin family. As to quaternary structure, heterotetramer of two alpha chains and two beta chains. As to expression, red blood cells.

Involved in oxygen transport from the lung to the various peripheral tissues. This chain is Hemoglobin subunit beta (HBB), found in Rhea americana (Greater rhea).